Here is a 1227-residue protein sequence, read N- to C-terminus: Anion exchange protein 3 (1227 aa).

The segment covering 1–11 (MANGVIPPPGG) has biased composition (pro residues). 3 disordered regions span residues 1–256 (MANG…DEAE), 286–312 (KPSR…KKKK), and 428–497 (NDDK…GDGH). Topologically, residues 1-707 (MANGVIPPPG…DLRDALHSQC (707 aa)) are cytoplasmic. Residues 58 to 75 (DPEKPSRSYSERDFEFHR) are compositionally biased toward basic and acidic residues. 2 stretches are compositionally biased toward basic residues: residues 76 to 97 (HTSH…KLRR) and 104 to 113 (RHTRRKRKKE). Residues 134–152 (AEEEEEEEEEEEGESEAEP) show a composition bias toward acidic residues. Ser-167, Ser-170, Ser-175, and Ser-198 each carry phosphoserine. Residues 194 to 215 (QSDQSPQRSGSSPSPRARASRI) show a composition bias toward low complexity. Arg-294 is subject to Omega-N-methylarginine. Low complexity predominate over residues 435–448 (FFPRNPSSSSVNSV). Over residues 480-497 (HDPDAKEKPLHMPGGDGH) the composition is skewed to basic and acidic residues. Transmembrane regions (helical) follow at residues 708 to 730 (VAAV…GLLG), 736 to 773 (LMGV…LLVF), 793 to 815 (VWVG…SFLV), and 825 to 846 (IFAF…YKVF). A membrane (anion exchange) region spans residues 708–1227 (VAAVLFIYFA…DEYNELHMPV (520 aa)). Asn-868 carries N-linked (GlcNAc...) asparagine glycosylation. Residues 888 to 905 (ALLSLILMLGTFLIAFFL) form a helical membrane-spanning segment. Residues 906–920 (RKFRNSRFLGGKARR) lie on the Cytoplasmic side of the membrane. The next 5 membrane-spanning stretches (helical) occupy residues 921 to 941 (IIGD…DYSI), 975 to 997 (PFPP…LIFM), 1023 to 1044 (LLLI…LTAA), 1078 to 1123 (VTGV…IQLS), and 1150 to 1186 (MHLF…TVPL). Residue Cys-1160 is the site of S-palmitoyl cysteine attachment.

Belongs to the anion exchanger (TC 2.A.31) family. As to expression, expressed in the brain.

Its subcellular location is the cell membrane. The enzyme catalyses hydrogencarbonate(in) + chloride(out) = hydrogencarbonate(out) + chloride(in). With respect to regulation, inhibited by 4,4'-diisothiocyanatostilbene-2,2'-disulfonic acid (DIDS). Functionally, sodium-independent anion exchanger which mediates the electroneutral exchange of chloride for bicarbonate ions across the cell membrane. May be involved in the regulation of intracellular pH, and the modulation of cardiac action potential. In Mus musculus (Mouse), this protein is Anion exchange protein 3 (Slc4a3).